Consider the following 1428-residue polypeptide: DNA-directed RNA polymerase subunit beta' (1428 aa).

Cysteine 66, cysteine 68, cysteine 81, and cysteine 84 together coordinate Zn(2+). Positions 472, 474, and 476 each coordinate Mg(2+). Residues cysteine 816, cysteine 890, cysteine 897, and cysteine 900 each coordinate Zn(2+).

The protein belongs to the RNA polymerase beta' chain family. In terms of assembly, the RNAP catalytic core consists of 2 alpha, 1 beta, 1 beta' and 1 omega subunit. When a sigma factor is associated with the core the holoenzyme is formed, which can initiate transcription. It depends on Mg(2+) as a cofactor. Zn(2+) serves as cofactor.

The enzyme catalyses RNA(n) + a ribonucleoside 5'-triphosphate = RNA(n+1) + diphosphate. Functionally, DNA-dependent RNA polymerase catalyzes the transcription of DNA into RNA using the four ribonucleoside triphosphates as substrates. The polypeptide is DNA-directed RNA polymerase subunit beta' (Phocaeicola vulgatus (strain ATCC 8482 / DSM 1447 / JCM 5826 / CCUG 4940 / NBRC 14291 / NCTC 11154) (Bacteroides vulgatus)).